The primary structure comprises 858 residues: Volume-regulated anion channel subunit LRRC8D (858 aa).

The Cytoplasmic portion of the chain corresponds to 1-22 (MFTLAEVASLNDIQPTYRILKP). Residues 23–48 (WWDVFMDYLAVVMLMVAIFAGTMQLT) traverse the membrane as a helical segment. The Extracellular portion of the chain corresponds to 49–163 (KDQVVCLPVL…YHLALPWYSK (115 aa)). Cys54 and Cys354 are joined by a disulfide. A helical membrane pass occupies residues 164–182 (YFPYLALIHTIILMVSSNF). The Cytoplasmic segment spans residues 183–308 (WFKYPKTCSK…EDSDLIYKLY (126 aa)). The tract at residues 221–251 (SEENKQRITGAQTLPKHVSTSSDEGSPSAST) is disordered. Polar residues predominate over residues 227-251 (RITGAQTLPKHVSTSSDEGSPSAST). Residues Ser241, Ser242, and Ser246 each carry the phosphoserine modification. A helical membrane pass occupies residues 309-328 (VVQTVIKTAKFIFILCYTAN). Over 329–360 (FVNAISFEHVCKPKVEHLIGYEVFECTHNMAY) the chain is Extracellular. The helical transmembrane segment at 361–386 (MLKKLLISYISIICVYGFICLYTLFW) threads the bilayer. Topologically, residues 387–858 (LFRIPLKEYS…DINIPFANGI (472 aa)) are cytoplasmic. LRR repeat units follow at residues 514–534 (NLQE…AFSF), 538–559 (HLRC…VYLL), 561–582 (NLRE…IGLE), 589–609 (HLKI…ITDV), 612–632 (HLTK…NSLK), 636–657 (NVAE…IFSL), 659–680 (NLQE…ISFQ), 684–705 (RLTC…ITHV), 707–728 (NLES…VFSL), 730–751 (KLRC…IGLL), 753–774 (NLQH…LFKC), 776–797 (KLRT…VGQL), and 799–820 (QLTQ…LGQC).

It belongs to the LRRC8 family. As to quaternary structure, heterohexamer; oligomerizes with other LRRC8 proteins (LRRC8A, LRRC8B, LRRC8C and/or LRRC8E) to form a heterohexamer. In vivo, the subunit composition may depend primarily on expression levels, and heterooligomeric channels containing various proportions of the different LRRC8 proteins may coexist.

It is found in the cell membrane. The protein localises to the endoplasmic reticulum membrane. It carries out the reaction chloride(in) = chloride(out). It catalyses the reaction iodide(out) = iodide(in). The catalysed reaction is taurine(out) = taurine(in). Non-essential component of the volume-regulated anion channel (VRAC, also named VSOAC channel), an anion channel required to maintain a constant cell volume in response to extracellular or intracellular osmotic changes. The VRAC channel conducts iodide better than chloride and can also conduct organic osmolytes like taurine. Plays a redundant role in the efflux of amino acids, such as aspartate, in response to osmotic stress. LRRC8A and LRRC8D are required for the uptake of the drug cisplatin. Channel activity requires LRRC8A plus at least one other family member (LRRC8B, LRRC8C, LRRC8D or LRRC8E); channel characteristics depend on the precise subunit composition. Also acts as a regulator of glucose-sensing in pancreatic beta cells: VRAC currents, generated in response to hypotonicity- or glucose-induced beta cell swelling, depolarize cells, thereby causing electrical excitation, leading to increase glucose sensitivity and insulin secretion. VRAC channels containing LRRC8D inhibit transport of immunoreactive cyclic dinucleotide GMP-AMP (2'-3'-cGAMP), an immune messenger produced in response to DNA virus in the cytosol. Mediates the import of the antibiotic blasticidin-S into the cell. The protein is Volume-regulated anion channel subunit LRRC8D of Homo sapiens (Human).